Consider the following 199-residue polypeptide: Transmembrane protein 9B (199 aa).

Positions 1–34 are cleaved as a signal peptide; that stretch reads MASLWCGNLLRLGSGLSMSCLALSVLLLAQLTGA. N-linked (GlcNAc...) asparagine glycosylation is present at Asn61. The chain crosses the membrane as a helical span at residues 106–126; that stretch reads IIIYLSILGLLLLYMVYLTLV. Phosphoserine is present on residues Ser143 and Ser190.

It belongs to the TMEM9 family. In terms of processing, N-glycosylated.

The protein localises to the lysosome membrane. It is found in the early endosome membrane. Enhances production of pro-inflammatory cytokines induced by TNF, IL1B, and TLR ligands. Has a role in TNF activation of both the NF-kappaB and MAPK pathways. The sequence is that of Transmembrane protein 9B (Tmem9b) from Mus musculus (Mouse).